The chain runs to 1158 residues: Nuclear receptor-interacting protein 1 (1158 aa).

The tract at residues 1–415 (MTHGEELGSD…EESSTPTTID (415 aa)) is interaction with ZNF366. Residues 21–25 (LEGLL) carry the LXXLL motif 1 motif. The tract at residues 33 to 56 (SGTAVDKKSAGHNEEDQNFNISGS) is disordered. Positions 37 to 47 (VDKKSAGHNEE) are enriched in basic and acidic residues. The segment at 78–333 (MLHLKKARLL…HLNGQARTSS (256 aa)) is repression domain 1. The residue at position 104 (Ser-104) is a Phosphoserine. Residue Lys-111 is modified to N6-acetyllysine; alternate. Residue Lys-111 forms a Glycyl lysine isopeptide (Lys-Gly) (interchain with G-Cter in SUMO2); alternate linkage. The LXXLL motif 2 signature appears at 133–137 (LASLL). Residue Lys-158 is modified to N6-acetyllysine. Lys-170 is covalently cross-linked (Glycyl lysine isopeptide (Lys-Gly) (interchain with G-Cter in SUMO2)). An LXXLL motif 3 motif is present at residues 185 to 189 (LKTLL). Residues Lys-195 and Lys-198 each participate in a glycyl lysine isopeptide (Lys-Gly) (interchain with G-Cter in SUMO2) cross-link. Position 207 is a phosphothreonine (Thr-207). A Phosphoserine modification is found at Ser-218. The short motif at 266–270 (LALLL) is the LXXLL motif 4 element. N6-acetyllysine is present on residues Lys-286 and Lys-310. Ser-356 carries the post-translational modification Phosphoserine. Lys-372 participates in a covalent cross-link: Glycyl lysine isopeptide (Lys-Gly) (interchain with G-Cter in SUMO2). Ser-378 is modified (phosphoserine). Residues 380-384 (LLHLL) carry the LXXLL motif 5 motif. Positions 393-435 (MNGHSHSERGSIFEESSTPTTIDEYSDNNPSFTDDSSGDESSY) are disordered. Positions 406 to 435 (EESSTPTTIDEYSDNNPSFTDDSSGDESSY) are enriched in polar residues. The repression domain 2 stretch occupies residues 410 to 700 (TPTTIDEYSD…PTGPEPGLSG (291 aa)). The segment at 431–472 (DESSYSNCVPIDLSCKHRTEKSESDQPVSLDNFTQSLLNTWD) is required for targeting to small nuclear foci. The CTBP-binding; principal site motif lies at 440–446 (PIDLSCK). 2 positions are modified to N6-acetyllysine: Lys-446 and Lys-481. Ser-487 bears the Phosphoserine mark. An LXXLL motif 6 motif is present at residues 500–504 (LLQLL). Lys-508 participates in a covalent cross-link: Glycyl lysine isopeptide (Lys-Gly) (interchain with G-Cter in SUMO2). Ser-518 bears the Phosphoserine mark. Residue Lys-528 is modified to N6-acetyllysine. Positions 540–563 (IESPSTNRTTPVSTPPLLTSSKAG) are disordered. Ser-542 carries the phosphoserine modification. Residues 548–560 (TTPVSTPPLLTSS) are compositionally biased toward low complexity. Ser-564 carries the post-translational modification Phosphoserine. 2 short sequence motifs (CTBP-binding) span residues 565–569 (PINLS) and 599–603 (SMDLT). Disordered regions lie at residues 592–622 (TNTASNHSMDLTKSKDPPGEKPAQNEGAQNS) and 641–663 (SSMSVEEQRPSKQLLTGNTDKPI). Basic and acidic residues predominate over residues 601–610 (DLTKSKDPPG). An N6-acetyllysine modification is found at Lys-606. Residues 641–659 (SSMSVEEQRPSKQLLTGNT) show a composition bias toward polar residues. Phosphoserine is present on Ser-671. The LXXLL motif 7 motif lies at 713 to 717 (LQLLL). A disordered region spans residues 716-745 (LLGNPNKGKSEKKEKTPLRDESTQEHSERA). Basic and acidic residues predominate over residues 723–745 (GKSEKKEKTPLRDESTQEHSERA). A repression domain 3 region spans residues 735–885 (DESTQEHSER…NIVDAANNHS (151 aa)). An interaction with ZNF366 region spans residues 753 to 1158 (VKIKSEPCDD…SVLTIKKESE (406 aa)). Residues Lys-756 and Lys-802 each participate in a glycyl lysine isopeptide (Lys-Gly) (interchain with G-Cter in SUMO2) cross-link. Ser-807 carries the post-translational modification Phosphoserine. Residues 819-823 (LSRLL) carry the LXXLL motif 8 motif. Residues Lys-850 and Lys-901 each participate in a glycyl lysine isopeptide (Lys-Gly) (interchain with G-Cter in SUMO2) cross-link. Lys-931 is subject to N6-acetyllysine; alternate. Lys-931 participates in a covalent cross-link: Glycyl lysine isopeptide (Lys-Gly) (interchain with G-Cter in SUMO2); alternate. The LXXLL motif 9 motif lies at 936–940 (LKQLL). The CTBP-binding motif lies at 946-950 (VRDLS). The disordered stretch occupies residues 950-974 (SPHRSNSVADSKKKGHKNNVTNSKP). Phosphoserine is present on Ser-1001. Residues 1061–1074 (LTKTNPILYYMLQK) carry the Ligand-dependent nuclear receptor binding motif. Residues Lys-1105, Lys-1115, and Lys-1154 each participate in a glycyl lysine isopeptide (Lys-Gly) (interchain with G-Cter in SUMO2) cross-link. A repression domain 4 region spans residues 1118–1158 (FFNLRSPYNSHMGNNASRPHSANGEVYGLLGSVLTIKKESE).

As to quaternary structure, interacts with RARA and RXRB homodimers and RARA/RXRB heterodimers in the presence of ligand. Interacts with HDAC1 and HDAC3 via its N-terminal domain. Interacts with NR2C1 (sumoylated form and via the ligand-binding domain); the interaction results in promoting the repressor activity of NR2C1. Interacts with CTBP1, CTBP2, ESR1, HDAC1, HDAC2, HDAC5, HDAC6, NR2C2, NR3C1, NR3C2, YWHAH, JUN and FOS. Found in a complex with both NR3C1 and YWHAH. Interacts with ZNF366. Interacts with RORA. Post-translationally, acetylation regulates its nuclear translocation and corepressive activity. Acetylation abolishes interaction with CTBP1. Phosphorylation enhances interaction with YWHAH.

The protein resides in the nucleus. Its function is as follows. Modulates transcriptional activation by steroid receptors such as NR3C1, NR3C2 and ESR1. Also modulates transcriptional repression by nuclear hormone receptors. Positive regulator of the circadian clock gene expression: stimulates transcription of BMAL1, CLOCK and CRY1 by acting as a coactivator for RORA and RORC. Involved in the regulation of ovarian function. Plays a role in renal development. This chain is Nuclear receptor-interacting protein 1 (NRIP1), found in Homo sapiens (Human).